The chain runs to 704 residues: Cystathionine beta-synthase cbs-1 (704 aa).

Pyridoxal 5'-phosphate contacts are provided by residues Asn-454, 562 to 566, and Ser-652; that span reads GTGGT.

It belongs to the cysteine synthase/cystathionine beta-synthase family. In terms of assembly, monomer. As to quaternary structure, does not bind pyridoxal 5'-phosphate, PLP; which may explain why this isoform has virtually undetectable catalytic activity. Requires pyridoxal 5'-phosphate as cofactor.

The protein localises to the cytoplasm. The catalysed reaction is L-homocysteine + L-serine = L,L-cystathionine + H2O. It functions in the pathway amino-acid biosynthesis; L-cysteine biosynthesis; L-cysteine from L-homocysteine and L-serine: step 1/2. Its function is as follows. Hydro-lyase catalyzing the first step of the transsulfuration pathway, where the hydroxyl group of L-serine is displaced by L-homocysteine in a beta-replacement reaction to form L-cystathionine, the precursor of L-cysteine. Plays a role in maintaining homocysteine homeostasis. Involved in cold-induced somatic longevity mediated by prostaglandin E2 (PGE2) signals from adult germ cells, perhaps acting via a role in the production of hydrogen sulfide (H2S). Required for normal development. The chain is Cystathionine beta-synthase cbs-1 from Caenorhabditis elegans.